A 533-amino-acid chain; its full sequence is WUSCHEL-related homeobox 7 (533 aa).

Disordered regions lie at residues 1–74 (MASS…NPRP) and 125–212 (SKNK…STQA). Positions 28–41 (AGSPPSLLSGSSAG) are enriched in low complexity. Residues 59–68 (GEERVPDPKP) are compositionally biased toward basic and acidic residues. A DNA-binding region (homeobox; WUS-type) is located at residues 65–129 (DPKPRWNPRP…NRKSRSKNKL (65 aa)). Residues 132–143 (GGTGRAGLGLGG) show a composition bias toward gly residues. A compositionally biased stretch (pro residues) spans 161-174 (FTPPPPILPAPQPV). Residues 175–202 (QPQQQLVSPVAAPTSSSSSSSDRSSGSS) are compositionally biased toward low complexity.

It belongs to the WUS homeobox family.

The protein localises to the nucleus. Its function is as follows. Transcription factor which may be involved in developmental processes. The polypeptide is WUSCHEL-related homeobox 7 (WOX7) (Oryza sativa subsp. japonica (Rice)).